Here is a 102-residue protein sequence, read N- to C-terminus: Large ribosomal subunit protein eL31 (102 aa).

The protein belongs to the eukaryotic ribosomal protein eL31 family.

The sequence is that of Large ribosomal subunit protein eL31 from Staphylothermus marinus (strain ATCC 43588 / DSM 3639 / JCM 9404 / F1).